A 150-amino-acid polypeptide reads, in one-letter code: MNVILLDKIANLGNLGDQVAVKAGYARNFLLPQGKAVVANAANTEVFEARRAELEAKLAADLAVATERADKINALESVVIASKAGDEGKLFGSIGNRDIADAVTAAGVELAKSEVRLPLGALRTTGEFEVEVQVHTEVKAIVKLSVVAED.

This sequence belongs to the bacterial ribosomal protein bL9 family.

Functionally, binds to the 23S rRNA. The sequence is that of Large ribosomal subunit protein bL9 from Shewanella woodyi (strain ATCC 51908 / MS32).